We begin with the raw amino-acid sequence, 751 residues long: MWNPLHETDSTSVAWRRPRWLCAGALVLAAGLFVLGFLFGWFIKSPNEAANISPQHNVKKAFLDELKAENIKTFLYNFTRIPHLAGTEQNFQLAKQIQSQWKEFGLDSVELAHYDVLLSYPNKTRPNYISIIDEDGNEIFNTSLFEPPPPGYENVSDVVPPFSAFSPQGMPEGDLVYVNYARTEDFFKLERDMKINCSGKILIARYGKIFRGNKVKNAQLAGAKGIILYSDPADYFAPGVQSYPDGWNLPGGGVQRGNILNLNGAGDPLTPGYPANEYAYRLQIAEAVGLPRIPVHPIGYSDAQKLLEKMGGSAPPDDSWKGSLHVPYNVGPGFTGNFSTQKVKMHIHSDNKVKRIYNVIGTLRGAVEPDRYVILGGHRDSWVFGGIDPQSGAAVVHEIVRSFGKLKKEGWRPRRTVLFASWDAEEYGLFGSTEWAEENSRILQERGVAYINADSSIEGNYTLRVDCTPLMYSLVYNLTKELQSPDEGFEGKSLFESWNEKSPSPEFSGLPRISKLGSGNDFEVFFQRLGIASGRARYTKDWVTNKFSSYPLYHSVYETYELVEKFYDPTFKYHLAVAQVRGGIVFELANSVVRPFDCRDYAVVLRNYADKLYNISMNHPQEMKAYSVSFDSLFSAVKNFTEIASNFSERVQDLDKNNPILLRIMNDQLMFLERAFIVPLGLPDRAFYRHVIYAPSSHNKYMGESFPGIYDALFDIENKVDPSKAWGEVKRQISIAAFTVQAAAGTLREVA.

At 1-19 (MWNPLHETDSTSVAWRRPR) the chain is on the cytoplasmic side. Ser-10 is modified (phosphoserine). The chain crosses the membrane as a helical; Signal-anchor for type II membrane protein span at residues 20 to 43 (WLCAGALVLAAGLFVLGFLFGWFI). Topologically, residues 44–750 (KSPNEAANIS…QAAAGTLREV (707 aa)) are extracellular. Asn-51, Asn-77, Asn-122, Asn-141, Asn-154, and Asn-196 each carry an N-linked (GlcNAc...) asparagine glycan. Positions 211 and 258 each coordinate substrate. 2 residues coordinate Ca(2+): Thr-270 and Tyr-273. The tract at residues 275 to 588 (ANEYAYRLQI…QVRGGIVFEL (314 aa)) is NAALADase. N-linked (GlcNAc...) asparagine glycosylation is present at Asn-337. Zn(2+)-binding residues include His-378 and Asp-388. Glu-425 serves as a coordination point for substrate. Glu-425 acts as the Nucleophile; for NAALADase activity in catalysis. Glu-426 is a binding site for Zn(2+). Residues Glu-434 and Glu-437 each coordinate Ca(2+). Zn(2+) is bound at residue Asp-454. N-linked (GlcNAc...) asparagine glycosylation is found at Asn-460 and Asn-477. Substrate is bound by residues 518–519 (SG), Asn-520, 535–537 (RAR), Tyr-553, and 553–554 (YH). His-554 provides a ligand contact to Zn(2+). An N-linked (GlcNAc...) asparagine glycan is attached at Asn-614. Ser-629 serves as the catalytic Charge relay system. Residues Asn-639 and Asn-646 are each glycosylated (N-linked (GlcNAc...) asparagine). Residues Asp-667 and His-690 each act as charge relay system in the active site. 700-701 (KY) is a binding site for substrate.

The protein belongs to the peptidase M28 family. M28B subfamily. In terms of assembly, homodimer. The cofactor is Zn(2+). As to expression, high expression in the duodenum and in the jejunum brush-border membrane. Weak expression in kidney.

The protein localises to the cell membrane. The catalysed reaction is Release of an unsubstituted, C-terminal glutamyl residue, typically from Ac-Asp-Glu or folylpoly-gamma-glutamates.. With respect to regulation, the NAALADase activity is inhibited by quisqualic acid, beta-NAAG and 2-(phosphonomethyl) pentanedioic acid (PMPA). Ethanol ingestion decreases the folate hydrolase activity by 50%. Functionally, has both folate hydrolase and N-acetylated-alpha-linked-acidic dipeptidase (NAALADase) activity. Has a preference for tri-alpha-glutamate peptides. In the intestine, required for the uptake of folate. In the brain, modulates excitatory neurotransmission through the hydrolysis of the neuropeptide, N-aceylaspartylglutamate (NAAG), thereby releasing glutamate. Its function is as follows. Also exhibits a dipeptidyl-peptidase IV type activity. In vitro, cleaves Gly-Pro-AMC. The chain is Glutamate carboxypeptidase 2 (FOLH1) from Sus scrofa (Pig).